Here is a 39-residue protein sequence, read N- to C-terminus: uncharacterized protein (39 aa).

This is an uncharacterized protein from Haemophilus influenzae (strain ATCC 51907 / DSM 11121 / KW20 / Rd).